The sequence spans 406 residues: Argininosuccinate synthase (406 aa).

Residues 12–20 (AYSGGLDTS) and A40 each bind ATP. Residues Y92 and S97 each contribute to the L-citrulline site. G122 is a binding site for ATP. L-aspartate contacts are provided by T124, N128, and D129. Residue N128 participates in L-citrulline binding. Positions 132, 181, 190, 266, and 278 each coordinate L-citrulline.

Belongs to the argininosuccinate synthase family. Type 1 subfamily. Homotetramer.

The protein localises to the cytoplasm. It carries out the reaction L-citrulline + L-aspartate + ATP = 2-(N(omega)-L-arginino)succinate + AMP + diphosphate + H(+). It functions in the pathway amino-acid biosynthesis; L-arginine biosynthesis; L-arginine from L-ornithine and carbamoyl phosphate: step 2/3. The sequence is that of Argininosuccinate synthase from Serratia proteamaculans (strain 568).